The sequence spans 512 residues: Keratin, type I cytoskeletal 24 (512 aa).

Residues Met1–Gly21 form a disordered region. Positions Met1–Ser140 are head. Positions Gly8 to Gly21 are enriched in low complexity. The interval Glu141–Trp176 is coil 1A. The 315-residue stretch at Glu141 to Cys455 folds into the IF rod domain. Residues Tyr177–Ile197 form a linker 1 region. The coil 1B stretch occupies residues Ile198–Met289. A linker 12 region spans residues Gln290 to Leu312. Residues Leu313–Asp451 form a coil 2 region. Residues Gly452–Lys512 are tail.

The protein belongs to the intermediate filament family. As to quaternary structure, heterotetramer of two type I and two type II keratins.

This is Keratin, type I cytoskeletal 24 (Krt24) from Mus musculus (Mouse).